The primary structure comprises 729 residues: Leucine-rich repeat flightless-interacting protein 2 (729 aa).

Positions 27-69 (IAREAEARLAAKRAARAEARDIRMRELERQQKELTHRYHDKKW) form a coiled coil. Disordered stretches follow at residues 80–156 (DHAR…SSSH), 230–268 (SARS…ESAA), and 289–344 (IPDL…CSLD). Residues 84 to 93 (HLQRSSHRHS) are compositionally biased toward basic residues. Residues 99–110 (VTPNHRSSSVDV) are compositionally biased toward polar residues. Residues 115-126 (RGRESISRRRDS) are compositionally biased toward basic and acidic residues. 2 stretches are compositionally biased toward low complexity: residues 137 to 147 (RTSNSYSNSYD) and 257 to 268 (SSDFSDQSESAA). The segment covering 304 to 320 (TTENYSRPSSRNATSGI) has biased composition (polar residues). 2 coiled-coil regions span residues 357 to 531 (DLKD…IGEK) and 574 to 722 (LDVR…KANR). The tract at residues 600–621 (DDERQKSAKNNSTTTDPTGLEN) is disordered. The segment covering 607-616 (AKNNSTTTDP) has biased composition (polar residues).

It belongs to the LRRFIP family.

May function as activator of the canonical Wnt signaling pathway upstream of ctnnb1/beta-catenin. Might be required for dorsal axis formation. In Xenopus laevis (African clawed frog), this protein is Leucine-rich repeat flightless-interacting protein 2 (lrrfip2).